A 125-amino-acid polypeptide reads, in one-letter code: Holo-[acyl-carrier-protein] synthase (125 aa).

Residues Asp-8 and Glu-57 each contribute to the Mg(2+) site.

Belongs to the P-Pant transferase superfamily. AcpS family. It depends on Mg(2+) as a cofactor.

It is found in the cytoplasm. The catalysed reaction is apo-[ACP] + CoA = holo-[ACP] + adenosine 3',5'-bisphosphate + H(+). Transfers the 4'-phosphopantetheine moiety from coenzyme A to a Ser of acyl-carrier-protein. This is Holo-[acyl-carrier-protein] synthase from Geotalea daltonii (strain DSM 22248 / JCM 15807 / FRC-32) (Geobacter daltonii).